The chain runs to 359 residues: Membrane-bound lytic murein transglycosylase C (359 aa).

Residues 1 to 16 (MKKYLALALIAPLLIS) form the signal peptide. Cys17 is lipidated: N-palmitoyl cysteine. Cys17 carries the S-diacylglycerol cysteine lipid modification.

This sequence belongs to the transglycosylase Slt family.

The protein resides in the cell outer membrane. It catalyses the reaction Exolytic cleavage of the (1-&gt;4)-beta-glycosidic linkage between N-acetylmuramic acid (MurNAc) and N-acetylglucosamine (GlcNAc) residues in peptidoglycan, from either the reducing or the non-reducing ends of the peptidoglycan chains, with concomitant formation of a 1,6-anhydrobond in the MurNAc residue.. Murein-degrading enzyme. May play a role in recycling of muropeptides during cell elongation and/or cell division. This Shigella dysenteriae serotype 1 (strain Sd197) protein is Membrane-bound lytic murein transglycosylase C.